The sequence spans 136 residues: UPF0310 protein HH_1062 (136 aa).

The protein belongs to the UPF0310 family.

The protein is UPF0310 protein HH_1062 of Helicobacter hepaticus (strain ATCC 51449 / 3B1).